Consider the following 417-residue polypeptide: NADH-quinone oxidoreductase subunit D (417 aa).

This sequence belongs to the complex I 49 kDa subunit family. NDH-1 is composed of 14 different subunits. Subunits NuoB, C, D, E, F, and G constitute the peripheral sector of the complex.

The protein localises to the cell inner membrane. The catalysed reaction is a quinone + NADH + 5 H(+)(in) = a quinol + NAD(+) + 4 H(+)(out). Functionally, NDH-1 shuttles electrons from NADH, via FMN and iron-sulfur (Fe-S) centers, to quinones in the respiratory chain. The immediate electron acceptor for the enzyme in this species is believed to be ubiquinone. Couples the redox reaction to proton translocation (for every two electrons transferred, four hydrogen ions are translocated across the cytoplasmic membrane), and thus conserves the redox energy in a proton gradient. The polypeptide is NADH-quinone oxidoreductase subunit D (Aromatoleum aromaticum (strain DSM 19018 / LMG 30748 / EbN1) (Azoarcus sp. (strain EbN1))).